The following is a 436-amino-acid chain: Enolase (436 aa).

Gln167 contacts (2R)-2-phosphoglycerate. The active-site Proton donor is the Glu209. 3 residues coordinate Mg(2+): Asp246, Glu291, and Asp318. 4 residues coordinate (2R)-2-phosphoglycerate: Lys343, Arg372, Ser373, and Lys394. Catalysis depends on Lys343, which acts as the Proton acceptor.

The protein belongs to the enolase family. As to quaternary structure, component of the RNA degradosome, a multiprotein complex involved in RNA processing and mRNA degradation. It depends on Mg(2+) as a cofactor.

It is found in the cytoplasm. The protein localises to the secreted. It localises to the cell surface. The enzyme catalyses (2R)-2-phosphoglycerate = phosphoenolpyruvate + H2O. Its pathway is carbohydrate degradation; glycolysis; pyruvate from D-glyceraldehyde 3-phosphate: step 4/5. Catalyzes the reversible conversion of 2-phosphoglycerate (2-PG) into phosphoenolpyruvate (PEP). It is essential for the degradation of carbohydrates via glycolysis. The polypeptide is Enolase (Haemophilus influenzae (strain PittGG)).